We begin with the raw amino-acid sequence, 427 residues long: 3-phosphoshikimate 1-carboxyvinyltransferase (427 aa).

Residues Lys-22, Ser-23, and Arg-27 each coordinate 3-phosphoshikimate. A phosphoenolpyruvate-binding site is contributed by Lys-22. Phosphoenolpyruvate contacts are provided by Gly-96 and Arg-124. The 3-phosphoshikimate site is built by Ser-169, Ser-170, Gln-171, Ser-197, Asp-313, Asn-336, and Lys-340. Gln-171 is a binding site for phosphoenolpyruvate. Catalysis depends on Asp-313, which acts as the Proton acceptor. The phosphoenolpyruvate site is built by Arg-344, Arg-386, and Lys-411.

Belongs to the EPSP synthase family. Monomer.

It localises to the cytoplasm. The catalysed reaction is 3-phosphoshikimate + phosphoenolpyruvate = 5-O-(1-carboxyvinyl)-3-phosphoshikimate + phosphate. The protein operates within metabolic intermediate biosynthesis; chorismate biosynthesis; chorismate from D-erythrose 4-phosphate and phosphoenolpyruvate: step 6/7. In terms of biological role, catalyzes the transfer of the enolpyruvyl moiety of phosphoenolpyruvate (PEP) to the 5-hydroxyl of shikimate-3-phosphate (S3P) to produce enolpyruvyl shikimate-3-phosphate and inorganic phosphate. In Shigella flexneri serotype 5b (strain 8401), this protein is 3-phosphoshikimate 1-carboxyvinyltransferase.